A 316-amino-acid chain; its full sequence is Small neutral protease regulatory protein (316 aa).

Residues 1–56 enclose the HTH lysR-type domain; sequence MRHLRALCAIADTGSVRRAARELGVSQPALTTQLRRIEQSLGAELFHRGRDGCRPT. Positions 16–35 form a DNA-binding region, H-T-H motif; sequence VRRAARELGVSQPALTTQLR.

The protein belongs to the LysR transcriptional regulatory family.

In terms of biological role, transcriptional trans-activator of the gene (mprA) for the small neutral protease. The chain is Small neutral protease regulatory protein (mprR) from Streptomyces coelicolor.